Consider the following 400-residue polypeptide: Argininosuccinate synthase (400 aa).

8–16 serves as a coordination point for ATP; that stretch reads AYSGGLDTS. 2 residues coordinate L-citrulline: Y87 and S92. ATP is bound at residue G117. Residues T119, N123, and D124 each coordinate L-aspartate. N123 provides a ligand contact to L-citrulline. Positions 127, 175, 259, and 271 each coordinate L-citrulline.

It belongs to the argininosuccinate synthase family. Type 1 subfamily. As to quaternary structure, homotetramer.

The protein localises to the cytoplasm. The catalysed reaction is L-citrulline + L-aspartate + ATP = 2-(N(omega)-L-arginino)succinate + AMP + diphosphate + H(+). Its pathway is amino-acid biosynthesis; L-arginine biosynthesis; L-arginine from L-ornithine and carbamoyl phosphate: step 2/3. The protein is Argininosuccinate synthase of Frankia casuarinae (strain DSM 45818 / CECT 9043 / HFP020203 / CcI3).